The primary structure comprises 289 residues: Four and a half LIM domains protein 3 (289 aa).

Residue S2 is modified to N-acetylserine. The C4-type zinc finger occupies 7-31 (CAKCNESLYGRKYIQTDSGPYCVPC). LIM zinc-binding domains are found at residues 40–92 (CAEC…CNEC) and 101–153 (CSAC…CVPC). K157 carries the N6-acetyllysine modification. 2 LIM zinc-binding domains span residues 162–212 (CARC…CVAC) and 221–275 (CSSC…FVPD). K244 is subject to N6-acetyllysine.

In terms of assembly, interacts with SOX15; the interaction recruits FHL3 to FOXK1 promoters where it acts as a transcriptional coactivator of FOXK1. Expressed in myogenic progenitor cells (at protein level). Expressed in skeletal striated muscle and the heart. Expressed to a lesser extent, in lung, and kidney. Expressed in skin and skeletal muscles such as the masseter, tongue, tibialis anterior and plantar muscles.

The protein resides in the nucleus. The protein localises to the cytoplasm. Functionally, recruited by SOX15 to FOXK1 promoters where it acts as a transcriptional coactivator of FOXK1. This Mus musculus (Mouse) protein is Four and a half LIM domains protein 3 (Fhl3).